A 554-amino-acid polypeptide reads, in one-letter code: MSEAEARPTNFIRQIVDEDLASGKHKSVHTRFPPEPNGYLHIGHAKSICLNFGIARDYQGQCNLRFDDTNPVKEDIEFVESIKHDVEWLGFEWSGNVRYSSDYFDQLHNYAVELINKGLAYVDELSPEQIREYRGSLTAPGKDSPYRGRSVEENLALFEKMRNGEFAEGTACLRAKIDMASSFIVMRDPVLYRIKFAEHHQTGNKWCIYPMYDFTHCISDALEGITHSLCTLEFQDNRRLYDWVLDNITIPCHPRQYEFSRLNLEYAIMSKRKLNLLVTEKIVEGWDDPRMPTVSGLRRRGYTAASIREFCQRIGVTKQDNNVEMMALEACIREELNENAPRAMAVLDPVKVVIENLTTGVEMVTMPNHPSKPEMGSREVPFSRDIYIDRADFREEANKQYKRLVLGKEVRLRNAYVIKAERIEKDAEGEITTIFCSYDPDTLSKDPADGRKVKGVIHWVSAEHALPAEIRVYDRLFSVPNPAAAEDFLTTINPESLVIKHGFVEPSLAAAQPEKAYQFEREGYFCADNRHSSAEHLVFNRTVGLRDTWAKIGA.

Residues 34-44 (PEPNGYLHIGH) carry the 'HIGH' region motif. ATP-binding positions include 35-37 (EPN) and 41-47 (HIGHAKS). Residues Asp67 and Tyr212 each contribute to the L-glutamine site. ATP-binding positions include Thr231, 261–262 (RL), and 269–271 (MSK). Positions 268-272 (IMSKR) match the 'KMSKS' region motif.

It belongs to the class-I aminoacyl-tRNA synthetase family. Monomer.

It is found in the cytoplasm. The enzyme catalyses tRNA(Gln) + L-glutamine + ATP = L-glutaminyl-tRNA(Gln) + AMP + diphosphate. This is Glutamine--tRNA ligase from Serratia proteamaculans (strain 568).